The following is a 130-amino-acid chain: MAKVQYMGTGRRKKSVARVRLVPGEGRVIVNNREIETYFGLETLRVVVNQPLVLTETKDKYDVLVNVHGGGLSGQAGAIRHGISRALLKADENLRPELKKAGFLTRDPRMVERKKCGLKKARRSPQFSKR.

It belongs to the universal ribosomal protein uS9 family.

This chain is Small ribosomal subunit protein uS9, found in Clostridium perfringens (strain ATCC 13124 / DSM 756 / JCM 1290 / NCIMB 6125 / NCTC 8237 / Type A).